The sequence spans 122 residues: Biogenesis of lysosome-related organelles complex 1 subunit BLS1 (122 aa).

Ser-33 bears the Phosphoserine mark.

It belongs to the BLOC1S1 family. Component of the biogenesis of lysosome-related organelles complex-1 (BLOC-1) composed of at least BLI1, BLS1, CNL1, KXD1, SNN1 and VAB2.

The protein localises to the endosome. Functionally, component of the biogenesis of lysosome-related organelles complex-1 (BLOC-1), a complex involved in endosomal cargo sorting. The chain is Biogenesis of lysosome-related organelles complex 1 subunit BLS1 (BLS1) from Saccharomyces cerevisiae (strain YJM789) (Baker's yeast).